Here is a 112-residue protein sequence, read N- to C-terminus: MYLSAQLMRTVTASHLTLRALSTPPLFQHRQIAAVEWCGTTRPGLARQKRTQHASSVISKSGVLSAKPSSVFLALLAGKLAEKYIYARMLLFHVSVVNECPVVFHSGPVVWK.

A mitochondrion-targeting transit peptide spans 1–21; that stretch reads MYLSAQLMRTVTASHLTLRAL.

The protein localises to the mitochondrion. This is an uncharacterized protein from Saccharomyces cerevisiae (strain ATCC 204508 / S288c) (Baker's yeast).